Here is a 135-residue protein sequence, read N- to C-terminus: ATP synthase epsilon chain (135 aa).

Residues serine 84 to serine 107 are disordered. Basic and acidic residues predominate over residues serine 86–lysine 102.

This sequence belongs to the ATPase epsilon chain family. As to quaternary structure, F-type ATPases have 2 components, CF(1) - the catalytic core - and CF(0) - the membrane proton channel. CF(1) has five subunits: alpha(3), beta(3), gamma(1), delta(1), epsilon(1). CF(0) has three main subunits: a, b and c.

The protein resides in the cell membrane. Its function is as follows. Produces ATP from ADP in the presence of a proton gradient across the membrane. The polypeptide is ATP synthase epsilon chain (Elusimicrobium minutum (strain Pei191)).